Consider the following 186-residue polypeptide: FMN reductase (NADPH) (186 aa).

Belongs to the SsuE family.

The catalysed reaction is FMNH2 + NADP(+) = FMN + NADPH + 2 H(+). This is FMN reductase (NADPH) (msuE) from Pseudomonas aeruginosa (strain ATCC 15692 / DSM 22644 / CIP 104116 / JCM 14847 / LMG 12228 / 1C / PRS 101 / PAO1).